The following is a 311-amino-acid chain: Malate dehydrogenase (311 aa).

NAD(+) is bound by residues 7-12 (GAGNVG) and Asp32. Positions 82 and 88 each coordinate substrate. Residues Asn95 and 118–120 (VSN) contribute to the NAD(+) site. The substrate site is built by Asn120 and Arg151. His175 (proton acceptor) is an active-site residue.

It belongs to the LDH/MDH superfamily. MDH type 3 family.

The catalysed reaction is (S)-malate + NAD(+) = oxaloacetate + NADH + H(+). Its function is as follows. Catalyzes the reversible oxidation of malate to oxaloacetate. In Flavobacterium johnsoniae (strain ATCC 17061 / DSM 2064 / JCM 8514 / BCRC 14874 / CCUG 350202 / NBRC 14942 / NCIMB 11054 / UW101) (Cytophaga johnsonae), this protein is Malate dehydrogenase.